The sequence spans 66 residues: Large ribosomal subunit protein bL35 (66 aa).

Basic residues-rich tracts occupy residues 1–15 (MPKLKTKSSAKKRFK) and 28–45 (TKRHGMTKRSKRSLRTRR). Positions 1 to 49 (MPKLKTKSSAKKRFKVTASGRVMSAQSTKRHGMTKRSKRSLRTRRGIAQ) are disordered.

This sequence belongs to the bacterial ribosomal protein bL35 family.

The protein is Large ribosomal subunit protein bL35 of Anaplasma marginale (strain Florida).